Here is a 329-residue protein sequence, read N- to C-terminus: Transcription factor RAX1 (329 aa).

2 consecutive HTH myb-type domains span residues 9 to 62 (KTKV…LNYL) and 63 to 117 (RPNI…RKKL). 2 DNA-binding regions (H-T-H motif) span residues 38 to 62 (WISF…LNYL) and 90 to 113 (WSII…NTKL). Composition is skewed to low complexity over residues 122-131 (SDSSSSAMAS) and 144-154 (PTSPTTIPSSS). Positions 122-162 (SDSSSSAMASPYLNPISQDVKRPTSPTTIPSSSYNPYAENP) are disordered.

In terms of tissue distribution, mostly expressed in roots. Also present in shoot tips and flower buds.

It localises to the nucleus. In terms of biological role, transcription activator of genes involved in the regulation of meristematic competence, such as CUC2. Positively regulates axillary meristems (AMs) formation and development, especially at early phases of vegetative growth, probably by specifying a stem cell niche for AM formation. Modulates the negative regulation mediated by gibberellic acid on the timing of developmental phase transitions. This Arabidopsis thaliana (Mouse-ear cress) protein is Transcription factor RAX1 (RAX1).